The following is a 354-amino-acid chain: Protein REDOX 1 (354 aa).

C44 is a binding site for Zn(2+). NAD(+) is bound at residue 45 to 49; it reads HSDLH. Residues H66, C97, C100, C103, and C111 each contribute to the Zn(2+) site. NAD(+)-binding positions include 185–190, K214, 271–273, 295–297, and R340; these read GLGGLG, VGA, and SAV.

This sequence belongs to the zinc-containing alcohol dehydrogenase family. It depends on Zn(2+) as a cofactor. In terms of tissue distribution, expressed in leaf epidermis.

The enzyme catalyses 3,17-didehydrostemmadenine + NADPH + H2O = (16S)-deshydroxymethyl-stemmadenine + formate + NADP(+). It carries out the reaction 3,17-didehydrostemmadenine + NADPH + H2O = (16R)-deshydroxymethyl-stemmadenine + formate + NADP(+). It catalyses the reaction 17-dehydrostemmadenine + NADP(+) = 3,17-didehydrostemmadenine + NADPH. It participates in alkaloid biosynthesis. Functionally, component of iboga and aspidosperma monoterpenoid indole alkaloids (MIAs, e.g. tabersonine and catharanthine) biosynthesis pathway from 19E-geissoschizine. Catalyzes the first oxidation step of the unstable intermediate product resulting from the reaction triggered by the geissoschizine oxidase (GO) in the stemmadenine biosynthesis process from 19E-geissoschizine. This chain is Protein REDOX 1, found in Catharanthus roseus (Madagascar periwinkle).